The following is a 246-amino-acid chain: Small ribosomal subunit protein uS2 (246 aa).

It belongs to the universal ribosomal protein uS2 family.

This is Small ribosomal subunit protein uS2 from Chromohalobacter salexigens (strain ATCC BAA-138 / DSM 3043 / CIP 106854 / NCIMB 13768 / 1H11).